The chain runs to 412 residues: Putative competence-damage inducible protein (412 aa).

The protein belongs to the CinA family.

The protein is Putative competence-damage inducible protein of Bacillus cereus (strain ZK / E33L).